Here is a 499-residue protein sequence, read N- to C-terminus: Probable alginate O-acetylase AlgI (499 aa).

Transmembrane regions (helical) follow at residues 7–25 (VFLF…LSPA), 40–62 (YAWW…YWIG), 78–100 (WLTL…NFGV), 115–137 (FVVT…ISYI), 150–172 (NLVD…VLRF), 239–261 (LYFD…GFRF), 312–334 (ILTM…WGAW), 354–373 (IRPL…WVIF), 380–397 (VAWR…WTLS), 407–429 (LQIA…QFYA), and 475–497 (VLLL…FLYF). The active site involves His322.

This sequence belongs to the membrane-bound acyltransferase family.

The protein localises to the cell inner membrane. It participates in glycan biosynthesis; alginate biosynthesis. Together with AlgJ and AlgF, forms an inner membrane complex which probably interacts with the alginate polymerization-transport complex and adds acetyl groups at the O-2 and O-3 positions of mannuronate residues. Acetylation of alginate increases cyst resistance to desiccation. The protein is Probable alginate O-acetylase AlgI (algI) of Azotobacter vinelandii.